We begin with the raw amino-acid sequence, 640 residues long: Phosphatidylinositol-binding clathrin assembly protein (640 aa).

Ser2 carries the post-translational modification N-acetylserine. One can recognise an ENTH domain in the interval Gln14–Phe145. 2 positions are modified to phosphoserine: Ser16 and Ser20. The segment at Lys221 to Thr294 is interaction with PIMREG. Lys238 participates in a covalent cross-link: Glycyl lysine isopeptide (Lys-Gly) (interchain with G-Cter in SUMO2). Phosphoserine is present on residues Ser303 and Ser315. The interval Asn543 to Pro568 is disordered. Residues Gly544 to Gln554 show a composition bias toward polar residues.

The protein belongs to the PICALM/SNAP91 family. Binds to clathrin; involves primarily the C-terminal sequences, but the full-length protein is required for full binding capacity. Binds phosphatidylinositol 4,5- bisphosphate. Interacts with PIMREG; this interaction may change the subcellular location into the nucleus. Interacts with AP2A1 (via its alpha-appendage domain). Interacts (via N-terminus) with VAMP2; VAMP3; VAMP7 and VAMP8 (Via N-terminus). Interacts with LC3/MAP1LC3A. As to expression, isoform 2 was found in most tissues examined. Isoform 1 has an overlapping expression pattern but is absent from lung, heart and pancreas. Both isoforms are widely expressed in the brain, higher levels are seen in hippocampus, dentate gyrus, medial habenula nucleus and cerebellar granule cells.

It is found in the cell membrane. The protein resides in the membrane. It localises to the clathrin-coated pit. Its subcellular location is the golgi apparatus. The protein localises to the cytoplasmic vesicle. It is found in the clathrin-coated vesicle. The protein resides in the nucleus. Cytoplasmic adapter protein that plays a critical role in clathrin-mediated endocytosis which is important in processes such as internalization of cell receptors, synaptic transmission or removal of apoptotic cells. Recruits AP-2 and attaches clathrin triskelions to the cytoplasmic side of plasma membrane leading to clathrin-coated vesicles (CCVs) assembly. Furthermore, regulates clathrin-coated vesicle size and maturation by directly sensing and driving membrane curvature. In addition to binding to clathrin, mediates the endocytosis of small R-SNARES (Soluble NSF Attachment Protein REceptors) between plasma membranes and endosomes including VAMP2, VAMP3, VAMP4, VAMP7 or VAMP8. In turn, PICALM-dependent SNARE endocytosis is required for the formation and maturation of autophagic precursors. Modulates thereby autophagy and the turnover of autophagy substrates such as MAPT/TAU or amyloid precursor protein cleaved C-terminal fragment (APP-CTF). The protein is Phosphatidylinositol-binding clathrin assembly protein (Picalm) of Rattus norvegicus (Rat).